Reading from the N-terminus, the 220-residue chain is Peptide methionine sulfoxide reductase MsrA (220 aa).

Cys-59 is an active-site residue.

This sequence belongs to the MsrA Met sulfoxide reductase family.

It carries out the reaction L-methionyl-[protein] + [thioredoxin]-disulfide + H2O = L-methionyl-(S)-S-oxide-[protein] + [thioredoxin]-dithiol. It catalyses the reaction [thioredoxin]-disulfide + L-methionine + H2O = L-methionine (S)-S-oxide + [thioredoxin]-dithiol. Its function is as follows. Has an important function as a repair enzyme for proteins that have been inactivated by oxidation. Catalyzes the reversible oxidation-reduction of methionine sulfoxide in proteins to methionine. This Corynebacterium kroppenstedtii (strain DSM 44385 / JCM 11950 / CIP 105744 / CCUG 35717) protein is Peptide methionine sulfoxide reductase MsrA.